The following is a 66-amino-acid chain: Protein translocase subunit SecE (66 aa).

The chain crosses the membrane as a helical span at residues 29-49 (LIASTLVVVAAVFIFSLICLV).

This sequence belongs to the SecE/SEC61-gamma family. As to quaternary structure, component of the Sec protein translocase complex. Heterotrimer consisting of SecY, SecE and SecG subunits. The heterotrimers can form oligomers, although 1 heterotrimer is thought to be able to translocate proteins. Interacts with the ribosome. Interacts with SecDF, and other proteins may be involved. Interacts with SecA.

The protein resides in the cell inner membrane. Essential subunit of the Sec protein translocation channel SecYEG. Clamps together the 2 halves of SecY. May contact the channel plug during translocation. This is Protein translocase subunit SecE from Rickettsia typhi (strain ATCC VR-144 / Wilmington).